Reading from the N-terminus, the 1029-residue chain is uncharacterized protein (1029 aa).

Basic and acidic residues predominate over residues 1-23 (MREWCMLRESRTNTPRRAAERGK). The tract at residues 1–31 (MREWCMLRESRTNTPRRAAERGKRPGGSSVR) is disordered. The Guanylate cyclase domain maps to 39-168 (TALCYDLVGS…AALAMAARLQ (130 aa)). 261–268 (GDAGIGKS) is a binding site for ATP.

This is an uncharacterized protein from Rhizobium meliloti (strain 1021) (Ensifer meliloti).